The chain runs to 198 residues: Recombination protein RecR (198 aa).

The C4-type zinc finger occupies 58–73 (CSICGNFTDSDPCAIC). In terms of domain architecture, Toprim spans 81–175 (SIICVIEEPK…KVTRIAHGIP (95 aa)).

The protein belongs to the RecR family.

May play a role in DNA repair. It seems to be involved in an RecBC-independent recombinational process of DNA repair. It may act with RecF and RecO. In Clostridium kluyveri (strain NBRC 12016), this protein is Recombination protein RecR.